The following is a 514-amino-acid chain: 2-isopropylmalate synthase (514 aa).

Residues 5 to 268 form the Pyruvate carboxyltransferase domain; that stretch reads LIIFDTTLRD…DVGIDTSQIV (264 aa). Residues D14, H202, H204, and N239 each contribute to the Mn(2+) site. The segment at 395-514 is regulatory domain; that stretch reads KFVSLSQRSE…KDDKVNPQRS (120 aa).

It belongs to the alpha-IPM synthase/homocitrate synthase family. LeuA type 1 subfamily. As to quaternary structure, homodimer. Requires Mn(2+) as cofactor.

The protein resides in the cytoplasm. It catalyses the reaction 3-methyl-2-oxobutanoate + acetyl-CoA + H2O = (2S)-2-isopropylmalate + CoA + H(+). Its pathway is amino-acid biosynthesis; L-leucine biosynthesis; L-leucine from 3-methyl-2-oxobutanoate: step 1/4. Its function is as follows. Catalyzes the condensation of the acetyl group of acetyl-CoA with 3-methyl-2-oxobutanoate (2-ketoisovalerate) to form 3-carboxy-3-hydroxy-4-methylpentanoate (2-isopropylmalate). In Burkholderia cenocepacia (strain ATCC BAA-245 / DSM 16553 / LMG 16656 / NCTC 13227 / J2315 / CF5610) (Burkholderia cepacia (strain J2315)), this protein is 2-isopropylmalate synthase.